Reading from the N-terminus, the 204-residue chain is Glycerol-3-phosphate acyltransferase (204 aa).

Transmembrane regions (helical) follow at residues 6-26, 80-100, 122-142, 144-164, and 168-188; these read YIII…YIVA, LVGI…VAGH, LAVN…VVAI, KYVS…MIMV, and AGLI…RANI.

The protein belongs to the PlsY family. Probably interacts with PlsX.

The protein resides in the cell membrane. It carries out the reaction an acyl phosphate + sn-glycerol 3-phosphate = a 1-acyl-sn-glycero-3-phosphate + phosphate. Its pathway is lipid metabolism; phospholipid metabolism. Its function is as follows. Catalyzes the transfer of an acyl group from acyl-phosphate (acyl-PO(4)) to glycerol-3-phosphate (G3P) to form lysophosphatidic acid (LPA). This enzyme utilizes acyl-phosphate as fatty acyl donor, but not acyl-CoA or acyl-ACP. This Clostridioides difficile (strain 630) (Peptoclostridium difficile) protein is Glycerol-3-phosphate acyltransferase.